The sequence spans 205 residues: Ras-related protein Rab-18-B (205 aa).

GTP contacts are provided by Ser-17, Gly-20, Lys-21, Ser-22, Ser-23, Asp-34, Pro-35, Thr-40, Gly-66, Lys-123, Asp-125, and Ala-152. Residue Ser-22 coordinates Mg(2+). 2 consecutive short sequence motifs (switch) follow at residues 31-45 (DTFD…GVDF) and 63-80 (DTAG…YYRG). Thr-40 contributes to the Mg(2+) binding site. The S-palmitoyl cysteine moiety is linked to residue Cys-198. Cys-202 bears the Cysteine methyl ester mark. Cys-202 carries S-geranylgeranyl cysteine lipidation. The propeptide at 203 to 205 (SLV) is removed in mature form.

Belongs to the small GTPase superfamily. Rab family. Requires Mg(2+) as cofactor.

It is found in the endoplasmic reticulum membrane. It localises to the golgi apparatus. Its subcellular location is the cis-Golgi network membrane. The protein localises to the lipid droplet. The protein resides in the apical cell membrane. The enzyme catalyses GTP + H2O = GDP + phosphate + H(+). Regulated by guanine nucleotide exchange factors (GEFs) which promote the exchange of bound GDP for free GTP. Regulated by GTPase activating proteins (GAPs) which increase the GTP hydrolysis activity at the ER membrane. Inhibited by GDP dissociation inhibitors (GDIs) which prevent Rab-GDP dissociation. Functionally, the small GTPases Rab are key regulators of intracellular membrane trafficking, from the formation of transport vesicles to their fusion with membranes. Rabs cycle between an inactive GDP-bound form and an active GTP-bound form that is able to recruit to membranes different sets of downstream effectors directly responsible for vesicle formation, movement, tethering and fusion. Required for the localization of ZFYVE1 to lipid droplets and for its function in mediating the formation of endoplasmic reticulum-lipid droplets (ER-LD) contacts. Also required for maintaining endoplasmic reticulum structure. Plays a role in apical endocytosis/recycling. Plays a key role in eye and brain development and neurodegeneration. This chain is Ras-related protein Rab-18-B (rab18b), found in Danio rerio (Zebrafish).